We begin with the raw amino-acid sequence, 295 residues long: Alpha-1A adrenergic receptor (295 aa).

Over 1-27 (MVFLSGNASDSSNCTHPPAPVNISKAI) the chain is Extracellular. N-linked (GlcNAc...) asparagine glycans are attached at residues asparagine 7, asparagine 13, and asparagine 22. A helical membrane pass occupies residues 28–51 (LLGVILGGLIIFGVLGNILVILSV). Over 52 to 64 (ACHRHLHSVTHYY) the chain is Cytoplasmic. A helical transmembrane segment spans residues 65–88 (IVNLAVADLLLTSTVLPFSAIFEI). Residues 89–99 (LGYWAFGRVFC) lie on the Extracellular side of the membrane. The cysteines at positions 99 and 176 are disulfide-linked. Residues 100–122 (NIWAAVDVLCCTASIMGLCIISI) traverse the membrane as a helical segment. Over 123-143 (DRYIGVSYPLRYPTIVTQKRG) the chain is Cytoplasmic. A helical membrane pass occupies residues 144 to 167 (LMALLCVWALSLVISIGPLFGWRQ). Residues 168-181 (PAPEDETICQITEE) are Extracellular-facing. A helical membrane pass occupies residues 182–205 (PGYVLFSALGSFYVPLTIILVMYC). Topologically, residues 206–273 (RVYVVAKRES…FSREKKAAKT (68 aa)) are cytoplasmic. At serine 215 the chain carries Phosphoserine; by PKA. A helical transmembrane segment spans residues 274-295 (LGIVVGCFVLCWLPFFLVMPIG).

Belongs to the G-protein coupled receptor 1 family. Adrenergic receptor subfamily. ADRA1A sub-subfamily. Homo- and heterooligomer. Heterooligomerizes with ADRA1B homooligomers in cardiac myocytes. Interacts with CAVIN4.

It localises to the nucleus membrane. It is found in the cell membrane. The protein localises to the cytoplasm. Its subcellular location is the membrane. The protein resides in the caveola. In terms of biological role, this alpha-adrenergic receptor mediates its action by association with G proteins that activate a phosphatidylinositol-calcium second messenger system. Its effect is mediated by G(q) and G(11) proteins. Nuclear ADRA1A-ADRA1B heterooligomers regulate phenylephrine (PE)-stimulated ERK signaling in cardiac myocytes. The polypeptide is Alpha-1A adrenergic receptor (ADRA1A) (Canis lupus familiaris (Dog)).